Reading from the N-terminus, the 776-residue chain is Venom dipeptidyl peptidase 4 (776 aa).

A signal peptide spans 1–19 (MVPLRSFVLLNGLFFVLLA). N-linked (GlcNAc...) asparagine glycosylation is found at Asn-44, Asn-66, and Asn-329. Intrachain disulfides connect Cys-449–Cys-452 and Cys-462–Cys-480. N-linked (GlcNAc...) asparagine glycans are attached at residues Asn-504 and Asn-577. The Charge relay system role is filled by Ser-638. Cys-658 and Cys-769 form a disulfide bridge. Asn-693 carries an N-linked (GlcNAc...) asparagine glycan. Active-site charge relay system residues include Asp-717 and His-749.

It belongs to the peptidase S9B family. DPPIV subfamily. In terms of tissue distribution, expressed by the venom gland.

It localises to the secreted. It catalyses the reaction Release of an N-terminal dipeptide, Xaa-Yaa-|-Zaa-, from a polypeptide, preferentially when Yaa is Pro, provided Zaa is neither Pro nor hydroxyproline.. Venom dipeptidyl-peptidase which removes N-terminal dipeptides sequentially from polypeptides having unsubstituted N-termini provided that the penultimate residue is proline. May process venom proteins into their active forms and/or modulate the chemotactic activity of immune cells after the insect sting. This chain is Venom dipeptidyl peptidase 4, found in Vespa velutina (Asian yellow-legged hornet).